Consider the following 293-residue polypeptide: Elongation factor Ts (293 aa).

Positions 79–82 (TDFV) are involved in Mg(2+) ion dislocation from EF-Tu.

Belongs to the EF-Ts family.

The protein localises to the cytoplasm. Functionally, associates with the EF-Tu.GDP complex and induces the exchange of GDP to GTP. It remains bound to the aminoacyl-tRNA.EF-Tu.GTP complex up to the GTP hydrolysis stage on the ribosome. This chain is Elongation factor Ts, found in Bacillus velezensis (strain DSM 23117 / BGSC 10A6 / LMG 26770 / FZB42) (Bacillus amyloliquefaciens subsp. plantarum).